The sequence spans 91 residues: Acylphosphatase (91 aa).

Positions 5–91 (CSKFIVSGHV…EHDYQGFEIL (87 aa)) constitute an Acylphosphatase-like domain. Residues R20 and N38 contribute to the active site.

This sequence belongs to the acylphosphatase family.

It catalyses the reaction an acyl phosphate + H2O = a carboxylate + phosphate + H(+). This Vibrio cholerae serotype O1 (strain ATCC 39315 / El Tor Inaba N16961) protein is Acylphosphatase (acyP).